Reading from the N-terminus, the 762-residue chain is Molybdenum cofactor sulfurase 2 (762 aa).

At Lys-234 the chain carries N6-(pyridoxal phosphate)lysine. The active site involves Cys-400. Residues 590-738 form the MOSC domain; the sequence is AWISKALRMP…LECGSILEPV (149 aa).

It belongs to the class-V pyridoxal-phosphate-dependent aminotransferase family. MOCOS subfamily. It depends on pyridoxal 5'-phosphate as a cofactor.

It catalyses the reaction Mo-molybdopterin + L-cysteine + AH2 = thio-Mo-molybdopterin + L-alanine + A + H2O. In terms of biological role, sulfurates the molybdenum cofactor. Sulfation of molybdenum is essential for xanthine dehydrogenase (XDH) and aldehyde oxidase (ADO) enzymes in which molybdenum cofactor is liganded by 1 oxygen and 1 sulfur atom in active form. The protein is Molybdenum cofactor sulfurase 2 of Aedes aegypti (Yellowfever mosquito).